The primary structure comprises 155 residues: Microsomal glutathione S-transferase 1 (155 aa).

Over 3–9 the chain is Lumenal; the sequence is DLTELMK. Residues 10 to 33 traverse the membrane as a helical segment; sequence NEVFMAFASYATIVLSKMMFMSTA. At 34 to 62 the chain is on the cytoplasmic side; sequence TAFYRLTRKVFANPEDCSSFGKGENAKKY. Glutathione is bound at residue Arg38. N6-acetyllysine is present on residues Lys42, Lys55, and Lys60. A helical membrane pass occupies residues 63-96; sequence LRTDERVERVRRAHLNDLENIVPFLGIGLLYSLS. Residues Arg73, Arg74, His76, and Glu81 each contribute to the glutathione site. Topologically, residues 97–99 are lumenal; it reads GPD. A helical membrane pass occupies residues 100 to 123; it reads LSTAILHFRLFVGARIYHTIAYLT. Tyr121 contacts glutathione. The Cytoplasmic segment spans residues 124–128; that stretch reads PLPQP. Residues 129-148 traverse the membrane as a helical segment; that stretch reads NRGLAFFLGYGVTLSMAYRL. Topologically, residues 149 to 155 are lumenal; the sequence is LKSRLYL.

The protein belongs to the MAPEG family. In terms of assembly, homotrimer; The trimer binds only one molecule of glutathione.

The protein localises to the endoplasmic reticulum membrane. The protein resides in the mitochondrion outer membrane. The catalysed reaction is RX + glutathione = an S-substituted glutathione + a halide anion + H(+). Conjugation of reduced glutathione to a wide number of exogenous and endogenous hydrophobic electrophiles. The sequence is that of Microsomal glutathione S-transferase 1 (MGST1) from Sus scrofa (Pig).